The sequence spans 338 residues: Ribosomal RNA small subunit methyltransferase H (338 aa).

Residues 53 to 55 (GGH), aspartate 72, tyrosine 99, aspartate 123, and glutamine 130 each bind S-adenosyl-L-methionine. Disordered stretches follow at residues 276 to 297 (EITP…PGMG) and 304 to 323 (TRGA…RSAP).

Belongs to the methyltransferase superfamily. RsmH family.

The protein localises to the cytoplasm. It carries out the reaction cytidine(1402) in 16S rRNA + S-adenosyl-L-methionine = N(4)-methylcytidine(1402) in 16S rRNA + S-adenosyl-L-homocysteine + H(+). Specifically methylates the N4 position of cytidine in position 1402 (C1402) of 16S rRNA. This is Ribosomal RNA small subunit methyltransferase H from Rhodococcus jostii (strain RHA1).